The chain runs to 580 residues: CRISPR-associated exonuclease Cas4/endonuclease Cas1 fusion (580 aa).

The CRISPR-associated exonuclease Cas4 stretch occupies residues 1–223 (MAPSDTPPSA…RCSLLPICLP (223 aa)). Position 44 (Cys-44) interacts with [4Fe-4S] cluster. Asp-112 and Glu-125 together coordinate Mn(2+). Residues Cys-212, Cys-215, and Cys-221 each contribute to the [4Fe-4S] cluster site. The segment at 248 to 580 (LYGQTPGARI…IPRYPHYCPR (333 aa)) is CRISPR-associated endonuclease Cas1. Residues Glu-401, His-472, and Glu-487 each contribute to the Mn(2+) site.

In the N-terminal section; belongs to the CRISPR-associated exonuclease Cas4 family. It in the C-terminal section; belongs to the CRISPR-associated endonuclease Cas1 family. Homodimer, forms a heterotetramer with a Cas2 homodimer. Requires [4Fe-4S] cluster as cofactor. The cofactor is Mg(2+). It depends on Mn(2+) as a cofactor.

It carries out the reaction exonucleolytic cleavage in the 5'- to 3'-direction to yield nucleoside 3'-phosphates.. Functionally, CRISPR (clustered regularly interspaced short palindromic repeat), is an adaptive immune system that provides protection against mobile genetic elements (viruses, transposable elements and conjugative plasmids). CRISPR clusters contain spacers, sequences complementary to antecedent mobile elements, and target invading nucleic acids. CRISPR clusters are transcribed and processed into CRISPR RNA (crRNA). The Cas4 region acts as a ssDNA exonuclease, while the Cas1 region acts as a dsDNA endonuclease. Involved in the integration of spacer DNA into the CRISPR cassette. The chain is CRISPR-associated exonuclease Cas4/endonuclease Cas1 fusion (cas4-cas1) from Rhodospirillum rubrum (strain ATCC 11170 / ATH 1.1.1 / DSM 467 / LMG 4362 / NCIMB 8255 / S1).